An 873-amino-acid chain; its full sequence is Programmed cell death 6-interacting protein (873 aa).

Alanine 2 carries the post-translational modification N-acetylalanine. The BRO1 domain occupies 3-397 (SFIWVQLKKT…AQMREATTLA (395 aa)). The tract at residues 176 to 508 (TVDISPDTVG…KFRAVLDKAV (333 aa)) is interaction with CHMP4A, CHMP4B and CHMP4C. Residue lysine 215 is modified to N6-acetyllysine. The tract at residues 423–873 (LTKSTAVVEQ…PPQQSYYPQQ (451 aa)) is interaction with SDCBP. Residue threonine 484 is modified to Phosphothreonine. Serine 486 carries the phosphoserine modification. Residues 508-873 (VQADGQVKER…PPQQSYYPQQ (366 aa)) form a self-association region. 2 disordered regions span residues 719–808 (AREP…GPPY) and 837–873 (PYPP…YPQQ). Positions 722–725 (PSAP) are interaction with TSG101. A Phosphoserine modification is found at serine 735. Phosphothreonine occurs at positions 742 and 745. Pro residues predominate over residues 745 to 767 (TPAPRTMPPAKPQPPARPPPPVL). The residue at position 749 (arginine 749) is an Omega-N-methylarginine. The segment covering 768–791 (PANRVPPAAAATAPAGVGTASAAP) has biased composition (low complexity). 2 stretches are compositionally biased toward pro residues: residues 792-808 (PQTP…GPPY) and 849-865 (APYP…PQPP). The tract at residues 802 to 811 (QAQGPPYPTY) is interaction with CEP55.

Self-associates. Interacts with SH3KBP1. Interacts with PDCD6 in a calcium-dependent manner. Interacts with TSG101 in a calcium-dependent manner; PDCD6IP homooligomerization may be required for TSG101-binding. Interacts with SGSM3. Directly interacts with CHMP4A, CHMP4B and CHMP4C. Directly interacts with CEP55 in a 1:2 stoechiometry; this interaction is required for PDCD6IP targeting to the midbody. May interact with PDGFRB. Interacts with SH3GL1 and SH3GL2/endophilin-1. Forms a complex with SDCBP and SDC2. Found in a complex with F-actin, TJP1/ZO-1 and PARD3. Interacts with CD2AP. Interacts with ARRDC1. Interacts (via BRO1 domain) with the ATG12-ATG3 conjugate; this interaction is bridged by ATG12 and promotes multiple PDCD6IP-mediated functions such as endolysosomal trafficking, macroautophagy and exosome biogenesis. May be phosphorylated on tyrosine residues by activated PDGFRB. Expressed in astrocytes and glioma cells.

It is found in the cytoplasm. Its subcellular location is the cytosol. The protein localises to the melanosome. It localises to the cytoskeleton. The protein resides in the microtubule organizing center. It is found in the centrosome. Its subcellular location is the secreted. The protein localises to the extracellular exosome. It localises to the cell junction. The protein resides in the tight junction. It is found in the midbody. Its subcellular location is the midbody ring. Its function is as follows. Multifunctional protein involved in endocytosis, multivesicular body biogenesis, membrane repair, cytokinesis, apoptosis and maintenance of tight junction integrity. Class E VPS protein involved in concentration and sorting of cargo proteins of the multivesicular body (MVB) for incorporation into intralumenal vesicles (ILVs) that are generated by invagination and scission from the limiting membrane of the endosome. Binds to the phospholipid lysobisphosphatidic acid (LBPA) which is abundant in MVBs internal membranes. The MVB pathway requires the sequential function of ESCRT-O, -I,-II and -III complexes. The ESCRT machinery also functions in topologically equivalent membrane fission events, such as the terminal stages of cytokinesis. Adapter for a subset of ESCRT-III proteins, such as CHMP4, to function at distinct membranes. Required for completion of cytokinesis. May play a role in the regulation of both apoptosis and cell proliferation. Regulates exosome biogenesis in concert with SDC1/4 and SDCBP. By interacting with F-actin, PARD3 and TJP1 secures the proper assembly and positioning of actomyosin-tight junction complex at the apical sides of adjacent epithelial cells that defines a spatial membrane domain essential for the maintenance of epithelial cell polarity and barrier. The sequence is that of Programmed cell death 6-interacting protein from Rattus norvegicus (Rat).